Here is a 1165-residue protein sequence, read N- to C-terminus: Leptin receptor (1165 aa).

Positions Met1–Ala21 are cleaved as a signal peptide. At Phe22–Asp839 the chain is on the extracellular side. 6 N-linked (GlcNAc...) asparagine glycosylation sites follow: Asn23, Asn41, Asn56, Asn73, Asn81, and Asn98. 5 disulfides stabilise this stretch: Cys37/Cys90, Cys89/Cys99, Cys131/Cys142, Cys186/Cys196, and Cys188/Cys193. N-linked (GlcNAc...) asparagine glycosylation occurs at Asn187. N-linked (GlcNAc...) asparagine glycosylation is found at Asn206, Asn276, Asn347, and Asn397. In terms of domain architecture, Fibronectin type-III 1 spans Pro239–Val333. The Ig-like domain maps to Gln331–Asp429. Intrachain disulfides connect Cys352-Cys412, Cys413-Cys418, Cys436-Cys447, Cys473-Cys528, and Cys488-Cys498. A leptin-binding region spans residues His467 to Glu484. 7 N-linked (GlcNAc...) asparagine glycosylation sites follow: Asn516, Asn624, Asn659, Asn688, Asn697, Asn728, and Asn750. 3 Fibronectin type-III domains span residues Pro539–Met634, Pro639–Ser732, and Ile740–Ile833. A WSXWS motif motif is present at residues Trp622–Ser626. Residues Ala840–Ile862 form a helical membrane-spanning segment. The Cytoplasmic portion of the chain corresponds to Ser863–Val1165. Residues Phe871–Lys879 carry the Box 1 motif motif. The residue at position 882 (Ser882) is a Phosphoserine. The segment at Glu893–Leu898 is required for JAK2 activation. A required for STAT3 phosphorylation region spans residues Leu898–Val906. Tyr986 carries the post-translational modification Phosphotyrosine; by JAK2. Residue Tyr1079 is modified to Phosphotyrosine. A Phosphotyrosine; by JAK2 modification is found at Tyr1141.

It belongs to the type I cytokine receptor family. Type 2 subfamily. As to quaternary structure, present as a mixture of monomers and dimers. The phosphorylated receptor binds a number of SH2 domain-containing proteins such as JAK2, STAT3, PTPN11, and SOCS3. Interaction with SOCS3 inhibits JAK/STAT signaling and MAPK cascade. In terms of processing, on ligand binding, phosphorylated on two conserved C-terminal tyrosine residues (isoform B only) by JAK2. Tyr-986 is required for complete binding and activation of PTPN11, ERK/FOS activation,for interaction with SOCS3 and SOCS3 mediated inhibition of leptin signaling. Phosphorylation on Tyr-1141 is required for STAT3 binding/activation. Phosphorylation of Tyr-1079 has a more accessory role. As to expression, isoform A is expressed in fetal liver and in hematopoietic tissues and choroid plexus. In adults highest expression in heart, liver, small intestine, prostate and ovary. Low level in lung and kidney. Isoform B is highly expressed in hypothalamus, but also in skeletal muscle. Detected in fundic and antral epithelial cells of the gastric mucosa. Isoform B and isoform A are expressed by NK cells (at protein level).

It is found in the cell membrane. It localises to the basolateral cell membrane. Its subcellular location is the secreted. Receptor for hormone LEP/leptin. On ligand binding, mediates LEP central and peripheral effects through the activation of different signaling pathways such as JAK2/STAT3 and MAPK cascade/FOS. In the hypothalamus, LEP acts as an appetite-regulating factor that induces a decrease in food intake and an increase in energy consumption by inducing anorexinogenic factors and suppressing orexigenic neuropeptides, also regulates bone mass and secretion of hypothalamo-pituitary-adrenal hormones. In the periphery, increases basal metabolism, influences reproductive function, regulates pancreatic beta-cell function and insulin secretion, is pro-angiogenic and affects innate and adaptive immunity. Control of energy homeostasis and melanocortin production (stimulation of POMC and full repression of AgRP transcription) is mediated by STAT3 signaling, whereas distinct signals regulate NPY and the control of fertility, growth and glucose homeostasis. Involved in the regulation of counter-regulatory response to hypoglycemia by inhibiting neurons of the parabrachial nucleus. Has a specific effect on T lymphocyte responses, differentially regulating the proliferation of naive and memory T -ells. Leptin increases Th1 and suppresses Th2 cytokine production. In terms of biological role, may transport LEP across the blood-brain barrier. Binds LEP and mediates LEP endocytosis. Does not induce phosphorylation of and activate STAT3. Functionally, antagonizes Isoform A and isoform B-mediated LEP binding and endocytosis. This is Leptin receptor (LEPR) from Homo sapiens (Human).